Consider the following 490-residue polypeptide: Ribosomal L1 domain-containing protein 1 (490 aa).

Methionine 1 carries the N-acetylmethionine modification. A compositionally biased stretch (low complexity) spans methionine 1 to alanine 27. The tract at residues methionine 1 to lysine 33 is disordered. Glycyl lysine isopeptide (Lys-Gly) (interchain with G-Cter in SUMO2) cross-links involve residues lysine 120 and lysine 254. Basic residues predominate over residues leucine 280–glutamate 293. Residues leucine 280–alanine 313 adopt a coiled-coil conformation. Positions leucine 280 to threonine 490 are disordered. The segment covering threonine 329–histidine 343 has biased composition (basic and acidic residues). A Phosphothreonine modification is found at threonine 340. The segment covering glycine 344–alanine 353 has biased composition (basic residues). At threonine 358 the chain carries Phosphothreonine. Serine 361 is modified (phosphoserine). At threonine 375 the chain carries Phosphothreonine. Positions proline 376–lysine 385 are enriched in basic and acidic residues. Residue lysine 380 forms a Glycyl lysine isopeptide (Lys-Gly) (interchain with G-Cter in SUMO2) linkage. Phosphoserine occurs at positions 392 and 396. Phosphothreonine occurs at positions 415 and 423. Serine 427 bears the Phosphoserine mark. Positions serine 427–alanine 460 are enriched in basic and acidic residues. Lysine 435 participates in a covalent cross-link: Glycyl lysine isopeptide (Lys-Gly) (interchain with G-Cter in SUMO2). Serine 443 is modified (phosphoserine). Lysine 461 is covalently cross-linked (Glycyl lysine isopeptide (Lys-Gly) (interchain with G-Cter in SUMO2)). Threonine 465 carries the phosphothreonine modification. Residue lysine 468 is modified to N6-acetyllysine. Residue serine 469 is modified to Phosphoserine. Over residues serine 469 to threonine 490 the composition is skewed to basic residues.

Belongs to the universal ribosomal protein uL1 family. Highly divergent. Interacts with ING1 (isoform 2). Interacts with KPNA7 and KPNA2. Expressed at high intensities in the heart, skeletal muscle, and placenta.

It localises to the nucleus. It is found in the nucleolus. In terms of biological role, regulates cellular senescence through inhibition of PTEN translation. Acts as a pro-apoptotic regulator in response to DNA damage. The sequence is that of Ribosomal L1 domain-containing protein 1 (RSL1D1) from Homo sapiens (Human).